A 185-amino-acid polypeptide reads, in one-letter code: Small ribosomal subunit protein uS4 (185 aa).

One can recognise an S4 RNA-binding domain in the interval 108-170 (RRLQTLVYRK…GKSPFVDASH (63 aa)).

Belongs to the universal ribosomal protein uS4 family. As to quaternary structure, part of the 30S ribosomal subunit. Contacts protein S5. The interaction surface between S4 and S5 is involved in control of translational fidelity.

Functionally, one of the primary rRNA binding proteins, it binds directly to 16S rRNA where it nucleates assembly of the body of the 30S subunit. With S5 and S12 plays an important role in translational accuracy. The chain is Small ribosomal subunit protein uS4 from Methanoregula boonei (strain DSM 21154 / JCM 14090 / 6A8).